A 294-amino-acid polypeptide reads, in one-letter code: Glycine--tRNA ligase alpha subunit (294 aa).

Belongs to the class-II aminoacyl-tRNA synthetase family. As to quaternary structure, tetramer of two alpha and two beta subunits.

The protein resides in the cytoplasm. It catalyses the reaction tRNA(Gly) + glycine + ATP = glycyl-tRNA(Gly) + AMP + diphosphate. This chain is Glycine--tRNA ligase alpha subunit, found in Trichormus variabilis (strain ATCC 29413 / PCC 7937) (Anabaena variabilis).